The sequence spans 22 residues: Superoxide dismutase [Cu-Zn] (22 aa).

Belongs to the Cu-Zn superoxide dismutase family. As to quaternary structure, homodimer. The cofactor is Cu cation. Zn(2+) serves as cofactor.

It is found in the cytoplasm. The enzyme catalyses 2 superoxide + 2 H(+) = H2O2 + O2. In terms of biological role, destroys radicals which are normally produced within the cells and which are toxic to biological systems. The polypeptide is Superoxide dismutase [Cu-Zn] (Hordeum vulgare (Barley)).